The chain runs to 55 residues: MAVPKRRMSRANTHTRRSQWKANNAPLQEVRVNGNTTRLPRRLVKAAQLGLVETD.

Basic residues predominate over residues 1–19 (MAVPKRRMSRANTHTRRSQ). Residues 1–21 (MAVPKRRMSRANTHTRRSQWK) form a disordered region.

It belongs to the bacterial ribosomal protein bL32 family.

The polypeptide is Large ribosomal subunit protein bL32 (Corynebacterium kroppenstedtii (strain DSM 44385 / JCM 11950 / CIP 105744 / CCUG 35717)).